A 660-amino-acid chain; its full sequence is Arginine--tRNA ligase, cytoplasmic (660 aa).

Methionine 1 carries the post-translational modification N-acetylmethionine. The segment at 1–72 is could be involved in the assembly of the multisynthetase complex; the sequence is MDVLVSECSA…QAERNKPTKN (72 aa). L-arginine is bound by residues 200-202, histidine 211, tyrosine 384, aspartate 388, and glutamine 412; that span reads SPN. Residues 201–212 carry the 'HIGH' region motif; it reads PNIAKEMHVGHL. Positions 529–543 are interaction with tRNA; that stretch reads NTAAYLLYAFTRIRS.

Belongs to the class-I aminoacyl-tRNA synthetase family. In terms of assembly, interacts (via N-terminus) with AIMP1 (via N-terminus); this stimulates its catalytic activity. Interacts (via N-terminus) with LARS2 (via C-terminus). Monomer. Part of a multisubunit complex that groups tRNA ligases for Arg (RARS1), Asp (DARS1), Gln (QARS1), Ile (IARS1), Leu (LARS1), Lys (KARS1), Met (MARS1) the bifunctional ligase for Glu and Pro (EPRS1) and the auxiliary subunits AIMP1/p43, AIMP2/p38 and EEF1E1/p18. Interacts with QARS1. Part of a complex composed of RARS1, QARS1 and AIMP1.

It is found in the cytoplasm. The protein localises to the cytosol. The catalysed reaction is tRNA(Arg) + L-arginine + ATP = L-arginyl-tRNA(Arg) + AMP + diphosphate. Functionally, forms part of a macromolecular complex that catalyzes the attachment of specific amino acids to cognate tRNAs during protein synthesis. Modulates the secretion of AIMP1 and may be involved in generation of the inflammatory cytokine EMAP2 from AIMP1. This is Arginine--tRNA ligase, cytoplasmic from Homo sapiens (Human).